A 421-amino-acid chain; its full sequence is Imidazolonepropionase (421 aa).

2 residues coordinate Fe(3+): His81 and His83. Zn(2+) contacts are provided by His81 and His83. 3 residues coordinate 4-imidazolone-5-propanoate: Arg90, Tyr153, and His186. Tyr153 is a binding site for N-formimidoyl-L-glutamate. Position 251 (His251) interacts with Fe(3+). His251 is a binding site for Zn(2+). Glu254 provides a ligand contact to 4-imidazolone-5-propanoate. A Fe(3+)-binding site is contributed by Asp326. Residue Asp326 coordinates Zn(2+). Residues Asn328 and Gly330 each contribute to the N-formimidoyl-L-glutamate site. Ser331 contacts 4-imidazolone-5-propanoate.

The protein belongs to the metallo-dependent hydrolases superfamily. HutI family. The cofactor is Zn(2+). It depends on Fe(3+) as a cofactor.

The protein resides in the cytoplasm. The catalysed reaction is 4-imidazolone-5-propanoate + H2O = N-formimidoyl-L-glutamate. It participates in amino-acid degradation; L-histidine degradation into L-glutamate; N-formimidoyl-L-glutamate from L-histidine: step 3/3. Functionally, catalyzes the hydrolytic cleavage of the carbon-nitrogen bond in imidazolone-5-propanoate to yield N-formimidoyl-L-glutamate. It is the third step in the universal histidine degradation pathway. The protein is Imidazolonepropionase of Streptococcus pyogenes serotype M18 (strain MGAS8232).